The chain runs to 261 residues: Cytochrome c oxidase subunit 3 (261 aa).

The Mitochondrial matrix segment spans residues 1-15 (MTHQTHAYHMVNPSP). A helical transmembrane segment spans residues 16 to 34 (WPLTGALSALLMTSGLIMW). Residues 35–40 (FHFNST) are Mitochondrial intermembrane-facing. Residues 41–66 (ALLMLGLTTNMLTMYQWWRDIVREST) traverse the membrane as a helical segment. At 67 to 72 (FQGHHT) the chain is on the mitochondrial matrix side. The chain crosses the membrane as a helical span at residues 73-105 (PTVQKGLRYGMILFIISEVLFFTGFFWAFYHSS). The Mitochondrial intermembrane portion of the chain corresponds to 106 to 128 (LAPTPELGGCWPPTGIHPLNPLE). Residues 129–152 (VPLLNTSVLLASGVSITWAHHSLM) form a helical membrane-spanning segment. The Mitochondrial matrix segment spans residues 153–155 (EGN). The helical transmembrane segment at 156–183 (RNHMLQALFITIALGVYFTLLQASEYYE) threads the bilayer. Residues 184-190 (APFTISD) are Mitochondrial intermembrane-facing. Residues 191–223 (GVYGSTFFVATGFHGLHVIIGSTFLIVCFFRQL) traverse the membrane as a helical segment. Topologically, residues 224–232 (KFHFTSNHH) are mitochondrial matrix. A helical transmembrane segment spans residues 233–256 (FGFEAAAWYWHFVDVVWLFLYVSI). Residues 257–261 (YWWGS) are Mitochondrial intermembrane-facing.

This sequence belongs to the cytochrome c oxidase subunit 3 family. Component of the cytochrome c oxidase (complex IV, CIV), a multisubunit enzyme composed of 14 subunits. The complex is composed of a catalytic core of 3 subunits MT-CO1, MT-CO2 and MT-CO3, encoded in the mitochondrial DNA, and 11 supernumerary subunits COX4I, COX5A, COX5B, COX6A, COX6B, COX6C, COX7A, COX7B, COX7C, COX8 and NDUFA4, which are encoded in the nuclear genome. The complex exists as a monomer or a dimer and forms supercomplexes (SCs) in the inner mitochondrial membrane with NADH-ubiquinone oxidoreductase (complex I, CI) and ubiquinol-cytochrome c oxidoreductase (cytochrome b-c1 complex, complex III, CIII), resulting in different assemblies (supercomplex SCI(1)III(2)IV(1) and megacomplex MCI(2)III(2)IV(2)).

The protein resides in the mitochondrion inner membrane. It catalyses the reaction 4 Fe(II)-[cytochrome c] + O2 + 8 H(+)(in) = 4 Fe(III)-[cytochrome c] + 2 H2O + 4 H(+)(out). Component of the cytochrome c oxidase, the last enzyme in the mitochondrial electron transport chain which drives oxidative phosphorylation. The respiratory chain contains 3 multisubunit complexes succinate dehydrogenase (complex II, CII), ubiquinol-cytochrome c oxidoreductase (cytochrome b-c1 complex, complex III, CIII) and cytochrome c oxidase (complex IV, CIV), that cooperate to transfer electrons derived from NADH and succinate to molecular oxygen, creating an electrochemical gradient over the inner membrane that drives transmembrane transport and the ATP synthase. Cytochrome c oxidase is the component of the respiratory chain that catalyzes the reduction of oxygen to water. Electrons originating from reduced cytochrome c in the intermembrane space (IMS) are transferred via the dinuclear copper A center (CU(A)) of subunit 2 and heme A of subunit 1 to the active site in subunit 1, a binuclear center (BNC) formed by heme A3 and copper B (CU(B)). The BNC reduces molecular oxygen to 2 water molecules using 4 electrons from cytochrome c in the IMS and 4 protons from the mitochondrial matrix. The chain is Cytochrome c oxidase subunit 3 (MT-CO3) from Cephalophorus natalensis (Natal red duiker).